The chain runs to 159 residues: Neuroglobin (159 aa).

In terms of domain architecture, Globin spans 3-151 (KLSSKDKELI…VVASMSRGWA (149 aa)). Heme b-binding residues include His66 and His98.

The protein belongs to the globin family. Monomer. Homodimers and homotetramers. Mainly monomeric but also detected as part of homodimers and homotetramers.

The protein localises to the cytoplasm. It localises to the cytosol. It is found in the mitochondrion matrix. It catalyses the reaction Fe(III)-heme b-[protein] + nitric oxide + H2O = Fe(II)-heme b-[protein] + nitrite + 2 H(+). Monomeric globin with a bis-histidyl six-coordinate heme-iron atom through which it can bind dioxygen, carbon monoxide and nitric oxide. Could help transport oxygen and increase its availability to the metabolically active neuronal tissues, though its low quantity in tissues as well as its high affinity for dioxygen, which may limit its oxygen-releasing ability, argue against it. The ferrous/deoxygenated form exhibits a nitrite reductase activity and it could produce nitric oxide which in turn inhibits cellular respiration in response to hypoxia. In its ferrous/deoxygenated state, it may also exhibit GDI (Guanine nucleotide Dissociation Inhibitor) activity toward heterotrimeric G-alpha proteins, thereby regulating signal transduction to facilitate neuroprotective responses in the wake of hypoxia and associated oxidative stress. This is Neuroglobin (ngb) from Tetraodon nigroviridis (Spotted green pufferfish).